We begin with the raw amino-acid sequence, 718 residues long: MLRSLWSGVNGMQAHQIALDIESNNIANVNTTGFKYSRASFVDMLSQVKLIATAPYKNGLAGQNDFSVGLGVGVDATTKIFSQGNIQNTDVKTDLAIQGDGFFIISPDRGITRNFTRDGEFLFDSQGSLVTTGGLVVQGWVRNGSDTGNKGSDTDALKVDNTGPLENIRIDPGMVMPARASNRISMRANLNAGRHADQTAAVFALDSSAKTPSDGINPVYDSGTNLAQVAEDMGSLYNEDGDALLLNENQGIWVSYKSAKMVKDILPSAENSTLELNGVKISFTNDSAVSRTSSLVAAKNAINAVKSQTGIEAYLDGKQLRLENTNELDGDEKLKNIVVTQAGTGAFANFLDGDKDVTAFKYSYTHSISPNADIGQFRTTEDLRALIQHDANIVKDPSLADNYQDSAASIGVTINQYGMFEINNKDNKNVIKENLNIFVSGYSSDSVTNNVLFKNAMKGLNTASLIEGGASASSSKFTHATHATSIDVIDSLGTKHAMRIEFYRSGGAEWNFRVIVPEPGELVGGSAARPNVFEGGRLHFNNDGSLAGMNPPLLQFDPKNGADAPQRINLAFGSSGSFDGLTSVDKISETYAIEQNGYQAGDLMDVRFDSDGVLLGAFSNGRTLALAQVALANFANDAGLQALGGNVFSQTGNSGQALIGAANTGRRGSISGSKLESSNVDLSRSLTNLIVVQRGFQANSKAVTTSDQILNTLLNLKQ.

This sequence belongs to the flagella basal body rod proteins family.

The protein localises to the bacterial flagellum basal body. The chain is Flagellar hook protein FlgE (flgE) from Helicobacter pylori (strain J99 / ATCC 700824) (Campylobacter pylori J99).